Reading from the N-terminus, the 159-residue chain is 18.0 kDa class I heat shock protein (159 aa).

A sHSP domain is found at 45–159 (ETAAFANTHI…PEVKSIHISG (115 aa)).

The protein belongs to the small heat shock protein (HSP20) family. As to quaternary structure, forms oligomeric structures.

The protein localises to the cytoplasm. This Daucus carota (Wild carrot) protein is 18.0 kDa class I heat shock protein.